The sequence spans 96 residues: Co-chaperonin GroES (96 aa).

The protein belongs to the GroES chaperonin family. As to quaternary structure, heptamer of 7 subunits arranged in a ring. Interacts with the chaperonin GroEL.

Its subcellular location is the cytoplasm. Together with the chaperonin GroEL, plays an essential role in assisting protein folding. The GroEL-GroES system forms a nano-cage that allows encapsulation of the non-native substrate proteins and provides a physical environment optimized to promote and accelerate protein folding. GroES binds to the apical surface of the GroEL ring, thereby capping the opening of the GroEL channel. This Legionella pneumophila (strain Paris) protein is Co-chaperonin GroES.